Reading from the N-terminus, the 562-residue chain is MLNKDQFADNHFIRTIIEDDLKSGKHEAVQTRFPPEPNGYLHIGHAKSICLNFGLAYIYDGLCNLRFDDTNPEKENDEYVNAIKEDVEWLGFHWAGEPRFASNYFDQLYDYAVGLIKDGKAYVDDLTPEEMREYRGTLTEAGKNSPYRDRSVEENLDLFTRMKNGEFPDGSKTLRLKIDMASGNINMRDPVIYRIRRAHHHNTGDKWCIYPMYDYTHCISDAIEGITHSLCTLEFEAHRPLYDWVLDNIHAPHATRPRQYEFSRLELLYTITSKRKLNQLVVEKHVSGWDDPRMPTISGMRRRGYTPEGLRLFAKRAGISKSENIVDMSVLEGAIREELENSAPRLMAVLNPLKVTLTNFEAGRTQSRRAAFHPNHEEMGEREVPISQTIYIEADDFAENPPKGFKRLIPGGEVRLRHGYVIKCDEVVKDEAGNVVELKCSIDHDTLGKNPEGRKVKGVIHWVSAEHAAEIKVRLYDRLFTIERPDAVRGEDGEYLPFTDFLNPESVKEITAYAEPAAKDLPAESRWQFERIGYFVTDRKDHGKDTPVFNRTVTLKDSWQPK.

Residues 35-45 carry the 'HIGH' region motif; it reads PEPNGYLHIGH. ATP contacts are provided by residues 36-38 and 42-48; these read EPN and HIGHAKS. Aspartate 68 and tyrosine 213 together coordinate L-glutamine. ATP is bound by residues threonine 232 and 264-265; that span reads RL. Residues 271–275 carry the 'KMSKS' region motif; it reads ITSKR.

This sequence belongs to the class-I aminoacyl-tRNA synthetase family. In terms of assembly, monomer.

The protein localises to the cytoplasm. The enzyme catalyses tRNA(Gln) + L-glutamine + ATP = L-glutaminyl-tRNA(Gln) + AMP + diphosphate. This chain is Glutamine--tRNA ligase, found in Neisseria meningitidis serogroup A / serotype 4A (strain DSM 15465 / Z2491).